Reading from the N-terminus, the 337-residue chain is HTH-type transcriptional regulator MalR (337 aa).

The region spanning 1-56 is the HTH lacI-type domain; it reads MVTIKDIAQAANVSTSTVSRVISGNPRISMQTREKVKATMKSFNYQPNRAARTLAT. Positions 4–23 form a DNA-binding region, H-T-H motif; the sequence is IKDIAQAANVSTSTVSRVIS.

In terms of biological role, transcriptional repressor of the malA gene for maltase. In Staphylococcus xylosus, this protein is HTH-type transcriptional regulator MalR (malR).